The chain runs to 125 residues: Small ribosomal subunit protein uS12 (125 aa).

Position 89 is a 3-methylthioaspartic acid (Asp-89). A disordered region spans residues 106-125; that stretch reads GVKDRKQSRSKYGAKRPKKA. Residues 113–125 show a composition bias toward basic residues; the sequence is SRSKYGAKRPKKA.

The protein belongs to the universal ribosomal protein uS12 family. Part of the 30S ribosomal subunit. Contacts proteins S8 and S17. May interact with IF1 in the 30S initiation complex.

Its function is as follows. With S4 and S5 plays an important role in translational accuracy. Interacts with and stabilizes bases of the 16S rRNA that are involved in tRNA selection in the A site and with the mRNA backbone. Located at the interface of the 30S and 50S subunits, it traverses the body of the 30S subunit contacting proteins on the other side and probably holding the rRNA structure together. The combined cluster of proteins S8, S12 and S17 appears to hold together the shoulder and platform of the 30S subunit. This Aromatoleum aromaticum (strain DSM 19018 / LMG 30748 / EbN1) (Azoarcus sp. (strain EbN1)) protein is Small ribosomal subunit protein uS12.